A 102-amino-acid polypeptide reads, in one-letter code: Large ribosomal subunit protein bL21 (102 aa).

The protein belongs to the bacterial ribosomal protein bL21 family. As to quaternary structure, part of the 50S ribosomal subunit. Contacts protein L20.

Its function is as follows. This protein binds to 23S rRNA in the presence of protein L20. This Neisseria meningitidis serogroup A / serotype 4A (strain DSM 15465 / Z2491) protein is Large ribosomal subunit protein bL21.